Consider the following 736-residue polypeptide: Probable beta-glucosidase L (736 aa).

The first 21 residues, 1 to 21, serve as a signal peptide directing secretion; the sequence is MNYRVPSLKATALAMAALTQA. Asparagine 224 carries N-linked (GlcNAc...) asparagine glycosylation. Residue aspartate 252 is part of the active site. Asparagine 295, asparagine 363, asparagine 429, and asparagine 607 each carry an N-linked (GlcNAc...) asparagine glycan.

The protein belongs to the glycosyl hydrolase 3 family.

The protein localises to the secreted. It carries out the reaction Hydrolysis of terminal, non-reducing beta-D-glucosyl residues with release of beta-D-glucose.. The protein operates within glycan metabolism; cellulose degradation. Its function is as follows. Beta-glucosidases are one of a number of cellulolytic enzymes involved in the degradation of cellulosic biomass. Catalyzes the last step releasing glucose from the inhibitory cellobiose. This Aspergillus terreus (strain NIH 2624 / FGSC A1156) protein is Probable beta-glucosidase L (bglL).